We begin with the raw amino-acid sequence, 261 residues long: ATP synthase subunit a (261 aa).

6 helical membrane-spanning segments follow: residues 45–65 (ITNV…ILVL), 107–127 (VMTL…PLSF), 133–153 (MAVT…LGFM), 162–182 (MFWV…IEVI), 209–229 (IAGF…VTAI), and 232–252 (LELL…CVYL).

This sequence belongs to the ATPase A chain family. F-type ATPases have 2 components, CF(1) - the catalytic core - and CF(0) - the membrane proton channel. CF(1) has five subunits: alpha(3), beta(3), gamma(1), delta(1), epsilon(1). CF(0) has four main subunits: a, b, b' and c.

Its subcellular location is the cell inner membrane. Functionally, key component of the proton channel; it plays a direct role in the translocation of protons across the membrane. In Cereibacter sphaeroides (strain ATCC 17025 / ATH 2.4.3) (Rhodobacter sphaeroides), this protein is ATP synthase subunit a.